A 413-amino-acid chain; its full sequence is NPL4-like protein 1 (413 aa).

A Phosphoserine modification is found at serine 104. An MPN domain is found at 131–272 (SVSFDRDCAN…ADVHFEPFQM (142 aa)).

It belongs to the NPL4 family.

It participates in protein degradation; proteasomal ubiquitin-dependent pathway. May be part of a complex that binds ubiquitinated proteins and that is necessary for the export of misfolded proteins from the ER to the cytoplasm, where they are degraded by the proteasome. The polypeptide is NPL4-like protein 1 (Arabidopsis thaliana (Mouse-ear cress)).